The primary structure comprises 297 residues: Protein CANDIDATE G-PROTEIN COUPLED RECEPTOR 8 (297 aa).

N-linked (GlcNAc...) asparagine glycosylation occurs at N20. 7 helical membrane passes run G34 to Y54, I70 to C90, L107 to F127, F142 to G162, W180 to M200, F215 to F235, and F242 to L262.

It belongs to the UPF0359 family.

It localises to the membrane. Functionally, G-protein coupled receptor. Plays a role in plants and microbes interactions. The sequence is that of Protein CANDIDATE G-PROTEIN COUPLED RECEPTOR 8 from Arabidopsis thaliana (Mouse-ear cress).